The following is a 371-amino-acid chain: Gamma-tocopherol methyltransferase, chloroplastic (371 aa).

A chloroplast-targeting transit peptide spans 1–65; the sequence is MAAAPVFFPS…NSNRIASRLQ (65 aa). Residues 153–162 are SAM motif I; it reads IVDVGCGIGG. Positions 216 to 224 are SAM motif II; that stretch reads GQFDLVWSM. The segment at 243 to 252 is SAM motif III; sequence VAAPGATIII.

This sequence belongs to the class I-like SAM-binding methyltransferase superfamily. gTMT family. Homodimer.

It is found in the plastid. The protein localises to the chloroplast inner membrane. The catalysed reaction is picrinine + S-adenosyl-L-methionine = ervincine + S-adenosyl-L-homocysteine + H(+). Its pathway is alkaloid biosynthesis; vindoline biosynthesis. S-adenosyl-L-methionine-dependent N-methyltransferase involved in the biosynthesis of biologically active monoterpenoid indole alkaloids (MIAs) natural products including vindoline. Inactive with picrinine as substrate. In Catharanthus roseus (Madagascar periwinkle), this protein is Gamma-tocopherol methyltransferase, chloroplastic.